The following is a 156-amino-acid chain: Snaclec A15 (156 aa).

The signal sequence occupies residues 1 to 23 (MGRFIFVRFGLLVVFLSLSGTGA). Cystine bridges form between Cys-27–Cys-38, Cys-55–Cys-152, and Cys-127–Cys-144. A C-type lectin domain is found at 34–153 (YDQHCYKAFD…CGDDYPFVCK (120 aa)). The N-linked (GlcNAc...) asparagine glycan is linked to Asn-141.

It belongs to the snaclec family. In terms of assembly, heterodimer; disulfide-linked. Expressed by the venom gland.

It is found in the secreted. In terms of biological role, interferes with one step of hemostasis (modulation of platelet aggregation, or coagulation cascade, for example). The protein is Snaclec A15 of Macrovipera lebetinus (Levantine viper).